The primary structure comprises 360 residues: MGISRSDLEETMSKPPDCLPRMLRGTPRQRVFTLFIISFKFTFLVSILIYWHTVGAPKDQRRQYSLPVDFPCPQLAFPRVSAPGNIFFLETSDRTNPSFLFMCSVESAARAHPESQVVVLMKGLPRDTTAWPRNLGISLLSCFPNVQIRPLDLQELFEDTPLAAWYLEAQHRWEPYLLPVLSDASRIALLWKFGGIYLDTDFIVLKNLRNLTNMLGIQSRYVLNGAFLAFERKHEFLALCIRDFVAHYNGWIWGHQGPQLLTRVFKKWCSIHSLKESRACRGVTALPPEAFYPIPWQNWKKYFEDVSPEELAQLLNATYAVHVWNKKSQGTHLEATSRALLAQLHARYCPTTHRAMTMYL.

Topologically, residues 1-30 (MGISRSDLEETMSKPPDCLPRMLRGTPRQR) are cytoplasmic. A helical; Signal-anchor for type II membrane protein membrane pass occupies residues 31-51 (VFTLFIISFKFTFLVSILIYW). Residues 52 to 360 (HTVGAPKDQR…TTHRAMTMYL (309 aa)) are Lumenal-facing. The DXD motif motif lies at 199–201 (DTD). Asn210 and Asn316 each carry an N-linked (GlcNAc...) asparagine glycan.

This sequence belongs to the glycosyltransferase 32 family. Ubiquitous. Highly expressed in kidney, mesenteric lymph node, spleen and brain.

Its subcellular location is the golgi apparatus membrane. It carries out the reaction a beta-D-Gal-(1-&gt;4)-beta-D-Glc-(1&lt;-&gt;1)-Cer(d18:1(4E)) + UDP-alpha-D-galactose = a globoside Gb3Cer (d18:1(4E)) + UDP + H(+). The enzyme catalyses a beta-D-Gal-(1&lt;-&gt;1')-ceramide + UDP-alpha-D-galactose = alpha-D-Gal-(1-&gt;4)-beta-D-Gal-(1&lt;-&gt;1')-Cer + UDP + H(+). The protein operates within glycolipid biosynthesis. Its function is as follows. Catalyzes the transfer of galactose from UDP-alpha-D-galactose to lactosylceramide/beta-D-galactosyl-(1-&gt;4)-beta-D-glucosyl-(1&lt;-&gt;1)-ceramide(d18:1(4E)) to produce globotriaosylceramide/globoside Gb3Cer (d18:1(4E)). Also able to transfer galactose to galactosylceramide/beta-D-Gal-(1&lt;-&gt;1')-Cer. Globoside Gb3Cer is a glycosphingolipid of the globo serie, one of the major types of neutral root structures of glycosphingolipids, that constitute a significant portion of mammalian cell membranes. The protein is Lactosylceramide 4-alpha-galactosyltransferase of Rattus norvegicus (Rat).